An 869-amino-acid polypeptide reads, in one-letter code: Kinesin-like protein KIN-10A (869 aa).

The span at 1 to 36 (MAPTPSSSRSNQTQYTLIRTPQTKQRLNFHSKTPNP) shows a compositional bias: polar residues. Positions 1-50 (MAPTPSSSRSNQTQYTLIRTPQTKQRLNFHSKTPNPDGSKDPSPPEHPVE) are disordered. A compositionally biased stretch (basic and acidic residues) spans 38-50 (GSKDPSPPEHPVE). The region spanning 48 to 367 (PVEVIGRIRD…LEYGAKAKCI (320 aa)) is the Kinesin motor domain. 129–136 (GPTGAGKS) provides a ligand contact to ATP. The stretch at 393-515 (RIAAMDEFII…EIEVEFRRSN (123 aa)) forms a coiled coil.

Belongs to the TRAFAC class myosin-kinesin ATPase superfamily. Kinesin family. KIN-10 subfamily. As to quaternary structure, binds microtubules.

The protein resides in the cytoplasm. It localises to the cytoskeleton. The protein localises to the phragmoplast. In terms of biological role, probable plus end-directed motor protein that may contribute to the transport of Golgi-derived vesicles in the phragmoplast. The chain is Kinesin-like protein KIN-10A from Arabidopsis thaliana (Mouse-ear cress).